The chain runs to 89 residues: Small ribosomal subunit protein uS17 (89 aa).

Belongs to the universal ribosomal protein uS17 family. In terms of assembly, part of the 30S ribosomal subunit.

One of the primary rRNA binding proteins, it binds specifically to the 5'-end of 16S ribosomal RNA. The sequence is that of Small ribosomal subunit protein uS17 from Coxiella burnetii (strain RSA 493 / Nine Mile phase I).